Consider the following 568-residue polypeptide: Involucrin (568 aa).

Disordered regions lie at residues 23–499 (CSPA…EKEL) and 517–568 (RKKH…HEVQ). Over residues 25 to 36 (PAQTQQEQTKQP) the composition is skewed to low complexity. The span at 49–77 (TQEKGFPKHEEKEANPVKDLPEQESEHHQ) shows a compositional bias: basic and acidic residues. A compositionally biased stretch (low complexity) spans 78–88 (QPGPQKQQLQV). Residues 89–106 (KKPEQELQEQELHSEKQP) are compositionally biased toward basic and acidic residues. Composition is skewed to low complexity over residues 107–121 (QEPQGLLCLGQQQQR), 133–154 (HQQPQQESQGQGLCLGQQQDVL), and 172–181 (PELPLGQQQK). Residues 193-213 (KQQKLHLVERHQEPQEQELHH) are compositionally biased toward basic and acidic residues. A compositionally biased stretch (low complexity) spans 217–232 (QKQQQPQEQELQLVQH). Composition is skewed to basic and acidic residues over residues 266–333 (ESHE…HQET) and 345–456 (KPHE…HLGK). Over residues 457 to 467 (QQEQQIEYEGY) the composition is skewed to low complexity. The residue at position 472 (serine 472) is a Phosphoserine. Composition is skewed to basic and acidic residues over residues 478-499 (KQEKASRGQELDDSHLEQEKEL), 517-532 (RKKHKLENLTQKEKQI), and 551-568 (VKEDSLTTKKQQHSHEVQ).

It belongs to the involucrin family. As to quaternary structure, directly or indirectly cross-linked to cornifelin (CNFN). Post-translationally, substrate of transglutaminase. Specific glutamines or lysines are cross-linked to keratins, desmoplakin and to inter involucrin molecules. As to expression, keratinocytes of epidermis and other stratified squamous epithelia.

It localises to the cytoplasm. Part of the insoluble cornified cell envelope (CE) of stratified squamous epithelia. This Rattus norvegicus (Rat) protein is Involucrin (Ivl).